We begin with the raw amino-acid sequence, 490 residues long: Aspartyl/glutamyl-tRNA(Asn/Gln) amidotransferase subunit B (490 aa).

The protein belongs to the GatB/GatE family. GatB subfamily. As to quaternary structure, heterotrimer of A, B and C subunits.

It catalyses the reaction L-glutamyl-tRNA(Gln) + L-glutamine + ATP + H2O = L-glutaminyl-tRNA(Gln) + L-glutamate + ADP + phosphate + H(+). The catalysed reaction is L-aspartyl-tRNA(Asn) + L-glutamine + ATP + H2O = L-asparaginyl-tRNA(Asn) + L-glutamate + ADP + phosphate + 2 H(+). In terms of biological role, allows the formation of correctly charged Asn-tRNA(Asn) or Gln-tRNA(Gln) through the transamidation of misacylated Asp-tRNA(Asn) or Glu-tRNA(Gln) in organisms which lack either or both of asparaginyl-tRNA or glutaminyl-tRNA synthetases. The reaction takes place in the presence of glutamine and ATP through an activated phospho-Asp-tRNA(Asn) or phospho-Glu-tRNA(Gln). This is Aspartyl/glutamyl-tRNA(Asn/Gln) amidotransferase subunit B from Methylorubrum extorquens (strain PA1) (Methylobacterium extorquens).